We begin with the raw amino-acid sequence, 233 residues long: Small ribosomal subunit protein uS2 (233 aa).

This sequence belongs to the universal ribosomal protein uS2 family.

This chain is Small ribosomal subunit protein uS2, found in Bacillus anthracis.